The primary structure comprises 297 residues: Acetylglutamate kinase (297 aa).

Residues 73–74, Arg-95, and Asn-188 contribute to the substrate site; that span reads GG.

The protein belongs to the acetylglutamate kinase family. ArgB subfamily.

The protein localises to the cytoplasm. It carries out the reaction N-acetyl-L-glutamate + ATP = N-acetyl-L-glutamyl 5-phosphate + ADP. Its pathway is amino-acid biosynthesis; L-arginine biosynthesis; N(2)-acetyl-L-ornithine from L-glutamate: step 2/4. In terms of biological role, catalyzes the ATP-dependent phosphorylation of N-acetyl-L-glutamate. This chain is Acetylglutamate kinase, found in Trichormus variabilis (strain ATCC 29413 / PCC 7937) (Anabaena variabilis).